The primary structure comprises 160 residues: Nucleotide-binding protein Patl_4311 (160 aa).

The protein belongs to the YajQ family.

Functionally, nucleotide-binding protein. In Pseudoalteromonas atlantica (strain T6c / ATCC BAA-1087), this protein is Nucleotide-binding protein Patl_4311.